A 312-amino-acid polypeptide reads, in one-letter code: Probable deoxyhypusine synthase (312 aa).

Lys-285 (nucleophile) is an active-site residue.

This sequence belongs to the deoxyhypusine synthase family. NAD(+) is required as a cofactor.

The catalysed reaction is [eIF5A protein]-L-lysine + spermidine = [eIF5A protein]-deoxyhypusine + propane-1,3-diamine. The protein operates within protein modification; eIF5A hypusination. Catalyzes the NAD-dependent oxidative cleavage of spermidine and the subsequent transfer of the butylamine moiety of spermidine to the epsilon-amino group of a specific lysine residue of the eIF-5A precursor protein to form the intermediate deoxyhypusine residue. The chain is Probable deoxyhypusine synthase (dys) from Saccharolobus solfataricus (strain ATCC 35092 / DSM 1617 / JCM 11322 / P2) (Sulfolobus solfataricus).